The following is a 328-amino-acid chain: Porphobilinogen deaminase (328 aa).

Residue C245 is modified to S-(dipyrrolylmethanemethyl)cysteine.

The protein belongs to the HMBS family. Monomer. It depends on dipyrromethane as a cofactor.

The enzyme catalyses 4 porphobilinogen + H2O = hydroxymethylbilane + 4 NH4(+). It functions in the pathway porphyrin-containing compound metabolism; protoporphyrin-IX biosynthesis; coproporphyrinogen-III from 5-aminolevulinate: step 2/4. The protein operates within porphyrin-containing compound metabolism; chlorophyll biosynthesis. Functionally, tetrapolymerization of the monopyrrole PBG into the hydroxymethylbilane pre-uroporphyrinogen in several discrete steps. This Gloeobacter violaceus (strain ATCC 29082 / PCC 7421) protein is Porphobilinogen deaminase.